Here is a 674-residue protein sequence, read N- to C-terminus: Slender lobes-like protein (674 aa).

Disordered stretches follow at residues 65 to 137 (LEKS…NASK), 168 to 321 (NELN…TIKK), and 352 to 382 (QKSRRQSLHVPSPELAAKNPKLRRRSERVEV). A compositionally biased stretch (basic residues) spans 73–97 (PKKKVQTKKHLPPVRKKDSVKRRRI). The span at 127-137 (NQSNCSSNASK) shows a compositional bias: polar residues. Residues 216–228 (VDSDDEEEQDQDQ) show a composition bias toward acidic residues. Over residues 233-245 (KPAESENHSEIKK) the composition is skewed to basic and acidic residues. S248 carries the phosphoserine modification. The segment covering 272 to 312 (EDPKEAGKNEESDKDKPAENGKSDKDKQAETEMSDEDKPSE) has biased composition (basic and acidic residues). Residues S358 and S391 each carry the phosphoserine modification. 2 disordered regions span residues 395 to 585 (MVAE…AGYV) and 618 to 659 (KYFR…NSAK). Positions 400–410 (KRQKNKRKRLS) are enriched in basic residues. S414 carries the post-translational modification Phosphoserine. The segment covering 548-558 (AKQKKKGKKKQ) has biased composition (basic residues).

The polypeptide is Slender lobes-like protein (Drosophila melanogaster (Fruit fly)).